The chain runs to 339 residues: 1-aminocyclopropane-1-carboxylate deaminase (339 aa).

K52 is modified (N6-(pyridoxal phosphate)lysine). S79 (nucleophile) is an active-site residue.

It belongs to the ACC deaminase/D-cysteine desulfhydrase family. In terms of assembly, homotrimer. The cofactor is pyridoxal 5'-phosphate.

It carries out the reaction 1-aminocyclopropane-1-carboxylate + H2O = 2-oxobutanoate + NH4(+). Catalyzes a cyclopropane ring-opening reaction, the irreversible conversion of 1-aminocyclopropane-1-carboxylate (ACC) to ammonia and alpha-ketobutyrate. Allows growth on ACC as a nitrogen source. In Rhizobium leguminosarum bv. viciae, this protein is 1-aminocyclopropane-1-carboxylate deaminase.